The sequence spans 287 residues: MFGLLRHLFKFQFLFVVAAVLGGIYHTEIRQFLRRQTDNYLDQAGQDASIPLAFQAGDDIGTLFTPAELAKFNGEEEGRPLYLALLGSVFDVSRGIKHYGSGCSYNFFVGRDASVSFISGDFETYDPETADDVLTLKPDDLIGLAGWRDFYQKDYVYKGRVIGRFYDEKGALTTYHHKFLELLEQARDAKRQVEELRARYPGCNIEWSEERGTRVWCTTTSGDGKERSWIGYPRKLYSRGNKSFQCACVPDAELDEIDAGGKVAHGDAMLKPYDNCEPQARECFYRV.

A signal peptide spans 1 to 22 (MFGLLRHLFKFQFLFVVAAVLG). One can recognise a Cytochrome b5 heme-binding domain in the interval 61–146 (GTLFTPAELA…KPDDLIGLAG (86 aa)). A coiled-coil region spans residues 175–204 (YHHKFLELLEQARDAKRQVEELRARYPGCN).

This sequence belongs to the cytochrome b5 family. MAPR subfamily.

Its subcellular location is the secreted. Its function is as follows. Heme-binding protein. This is Neuferricin homolog from Drosophila melanogaster (Fruit fly).